Here is a 583-residue protein sequence, read N- to C-terminus: MPRGLELLIAQTILQGFDAQYGRFLEVTSGAQQRFEQADWHAVQQAMKSRIHLYDHHVGLVVEQLRCITDGKSTDADFLLRVKEHYTRLLPDYPRFEIAESFFNSVYCRLFDHRSLTPERLFIFSSQPERRFRTIPRPLAKDFFPDHGWETLLMRMLSDLPLRLPWQNKSRDIRYIIAHLTETLGEDALPRCHVQVANELFYRNKAAWLVGKLTTPDGTLPFLLPIHRTDEGELFVDTCLTTTAEASIVFGFARSYFMVYAPLPAALVEWLREILPGKTTAELYMAIGCQKHAKTESYREYLCYLTESDEKFIEAPGIRGMVMLVFTLPGFDRVFKIIKDKFAPQKEMSAAHVRACYQLVKEHDRVGRMADTQEFENFVLDKRQIDPALMALLRQEVPEKITDLGEHIVIRHLYIERRMVPLNIWLEQVEGQQLRDAIEEYGNAIRQLAAANIFPGDMLFKNFGVTRHGRVVFYDYDEICYMTEVNFRDIPPARYPEDELASEPWYSVSPGDVFPEEFRHWLCADPRIGPLFEEMHADLFRADYWRALQTRIKEGHVEDVYAYRRRQRFSVRYGAISSTANSS.

Residues 315-321 (APGIRGM) and Lys336 each bind ATP. Residue Asp371 is part of the active site.

Belongs to the AceK family.

Its subcellular location is the cytoplasm. The enzyme catalyses L-seryl-[isocitrate dehydrogenase] + ATP = O-phospho-L-seryl-[isocitrate dehydrogenase] + ADP + H(+). In terms of biological role, bifunctional enzyme which can phosphorylate or dephosphorylate isocitrate dehydrogenase (IDH) on a specific serine residue. This is a regulatory mechanism which enables bacteria to bypass the Krebs cycle via the glyoxylate shunt in response to the source of carbon. When bacteria are grown on glucose, IDH is fully active and unphosphorylated, but when grown on acetate or ethanol, the activity of IDH declines drastically concomitant with its phosphorylation. This chain is Isocitrate dehydrogenase kinase/phosphatase, found in Salmonella heidelberg (strain SL476).